The sequence spans 243 residues: Transcription factor TFIIS homolog (243 aa).

Residues 77–201 form the TFIIS central domain; sequence MRDIIQMMFF…SQQKVAEKTS (125 aa). A TFIIS-type zinc finger spans residues 202 to 242; the sequence is QLYKCPNCKQRMCTYREVQTRALDEPSTIFCTCKKCGHEFI. Cysteine 206, cysteine 209, cysteine 234, and cysteine 237 together coordinate Zn(2+).

Belongs to the TFS-II family.

Functionally, putative initiation factor. Necessary for efficient transcription elongation past template-encoded arresting sites. The chain is Transcription factor TFIIS homolog from Ornithodoros (relapsing fever ticks).